Here is a 577-residue protein sequence, read N- to C-terminus: Insulin-like growth factor 2 mRNA-binding protein 1 (577 aa).

RRM domains lie at 2–75 and 81–156; these read NKLY…HSVP and RKIQ…YIPD. Phosphoserine occurs at positions 12 and 73. The tract at residues 156-190 is disordered; it reads DEQITQGPENGRRGGFGSRGQPRQGSPVAAGAPAK. The residue at position 181 (Ser181) is a Phosphoserine; by MTOR. 4 KH domains span residues 195 to 260, 276 to 343, 405 to 470, and 487 to 553; these read DIPL…CKMI, EVPL…EQEI, QEMV…QGRI, and KLET…QRKI. The tract at residues 312-323 is sufficient for nuclear export; sequence ISSLQDLTLYNP. Positions 485 to 495 are sufficient for nuclear export; that stretch reads EVKLETHIRVP. A Phosphothreonine modification is found at Thr528.

Belongs to the RRM IMP/VICKZ family. In terms of assembly, can form homodimers and heterodimers with IGF2BP1 and IGF2BP3. Component of the coding region determinant (CRD)-mediated complex, composed of DHX9, HNRNPU, IGF2BP1, SYNCRIP and YBX1. Identified in a mRNP complex, at least composed of DHX9, DDX3X, ELAVL1, HNRNPU, IGF2BP1, ILF3, PABPC1, PCBP2, PTBP2, STAU1, STAU2, SYNCRIP and YBX1. Associates with mRNP complex. Interacts with FMR1. Component of a multisubunit autoregulatory RNP complex (ARC), at least composed of IGF2BP1, PABPC1 and CSDE1. Interacts with AGO1 and AGO2. Interacts, through domains KH3 and KH4, with PABPC1 in an RNA-independent manner. Component of a TAU mRNP complex, at least composed of IGF2BP1, ELAVL4 and G3BP. Interacts with ELAVL4 in an RNA-dependent manner. Associates with microtubules and polysomes. Interacts with ELAVL1 and MATR3. Phosphorylated at Ser-181 by mTORC2 cotranslationally, promoting binding to the 3'-UTR of IGF2 mRNA. In terms of tissue distribution, expressed in zygotes and blastocysts (at protein level). Expressed in brain, skeletal muscle, trophoblasts of placenta, oocytes and spermatogonia (at protein level). Expressed in testis and ovary. Following colon injury, expressed in the wound bed mesenchyme during the first phase of repair, probably by colonic mesenchymal stem cells (at protein level).

The protein localises to the nucleus. The protein resides in the cytoplasm. Its subcellular location is the perinuclear region. It localises to the P-body. It is found in the stress granule. The protein localises to the cell projection. The protein resides in the lamellipodium. Its subcellular location is the dendrite. It localises to the dendritic spine. It is found in the growth cone. The protein localises to the filopodium. The protein resides in the axon. Functionally, RNA-binding factor that recruits target transcripts to cytoplasmic protein-RNA complexes (mRNPs). This transcript 'caging' into mRNPs allows mRNA transport and transient storage. It also modulates the rate and location at which target transcripts encounter the translational apparatus and shields them from endonuclease attacks or microRNA-mediated degradation. Preferentially binds to N6-methyladenosine (m6A)-containing mRNAs and increases their stability. Regulates localized beta-actin/ACTB mRNA translation, a crucial process for cell polarity, cell migration and neurite outgrowth. Co-transcriptionally associates with the ACTB mRNA in the nucleus. This binding involves a conserved 54-nucleotide element in the ACTB mRNA 3'-UTR, known as the 'zipcode'. The RNP thus formed is exported to the cytoplasm, binds to a motor protein and is transported along the cytoskeleton to the cell periphery. During transport, prevents ACTB mRNA from being translated into protein. When the RNP complex reaches its destination near the plasma membrane, IGF2BP1 is phosphorylated. This releases the mRNA, allowing ribosomal 40S and 60S subunits to assemble and initiate ACTB protein synthesis. Monomeric ACTB then assembles into the subcortical actin cytoskeleton. During neuronal development, key regulator of neurite outgrowth, growth cone guidance and neuronal cell migration, presumably through the spatiotemporal fine tuning of protein synthesis, such as that of ACTB. May regulate mRNA transport to activated synapses. Binds to the 3'-UTR of CD44 mRNA and stabilizes it, hence promotes cell adhesion and invadopodia formation in cancer cells. Binds to the oncofetal H19 transcript and regulates its localization. Binds to and stabilizes BTRC/FBW1A mRNA. Binds to the adenine-rich autoregulatory sequence (ARS) located in PABPC1 mRNA and represses its translation. PABPC1 mRNA-binding is stimulated by PABPC1 protein. Prevents BTRC/FBW1A mRNA degradation by disrupting microRNA-dependent interaction with AGO2. During cellular stress, such as oxidative stress or heat shock, stabilizes target mRNAs that are recruited to stress granules, including CD44, IGF2, MAPK4, MYC, PTEN, RAPGEF2 and RPS6KA5 transcripts. Interacts with GAP43 transcript and transports it to axons. Binds to the 3'-UTR of IGF2 mRNA by a mechanism of cooperative and sequential dimerization and regulates IGF2 mRNA subcellular localization and translation. Binds to MYC mRNA, in the coding region instability determinant (CRD) of the open reading frame (ORF), hence prevents MYC cleavage by endonucleases and possibly microRNA targeting to MYC-CRD. Binding to MYC mRNA is enhanced by m6A-modification of the CRD. Binds to and stabilizes ABCB1/MDR-1 mRNA. Binds to the neuron-specific TAU mRNA and regulates its localization. Plays a direct role in the transport and translation of transcripts required for axonal regeneration in adult sensory neurons. During interstinal wound repair, interacts with and stabilizes PTGS2 transcript. PTGS2 mRNA stabilization may be crucial for colonic mucosal wound healing. This Mus musculus (Mouse) protein is Insulin-like growth factor 2 mRNA-binding protein 1 (Igf2bp1).